The sequence spans 1270 residues: Microtubule-associated tumor suppressor 1 homolog (1270 aa).

The span at 1 to 14 (MTDDNSDDKIEDEL) shows a compositional bias: acidic residues. 3 disordered regions span residues 1–50 (MTDD…NSAN), 183–217 (SFHTAGSLPPTGRRSGNTSSLSYSTWTSSHSDKMH), and 374–402 (TEDTQMVTKGKDSGTQNHTSELILSSPPG). The span at 39 to 50 (SSASSVNWNSAN) shows a compositional bias: low complexity. A Phosphothreonine modification is found at threonine 186. Positions 200–211 (TSSLSYSTWTSS) are enriched in low complexity. 3 positions are modified to phosphoserine: serine 386, serine 399, and serine 443. Polar residues predominate over residues 386–396 (SGTQNHTSELI). Disordered regions lie at residues 524 to 558 (DAALSKVTPRPQLTSASSPSSAISRQPTVLSRTPR) and 592 to 622 (THSKNASHRVPRTTSAVKSNQEDVDKASSSN). A compositionally biased stretch (low complexity) spans 538-547 (SASSPSSAIS). Residue serine 629 is modified to Phosphoserine. Composition is skewed to polar residues over residues 701-710 (SKTTTTSGRN), 759-776 (VSSSGKPTSLKTAQSSWV), and 797-816 (TGSTPSIASTHSELSTYSNN). Residues 701-816 (SKTTTTSGRN…HSELSTYSNN (116 aa)) form a disordered region. Residues 940–1231 (IQHLLSEREE…RLSMENEELL (292 aa)) adopt a coiled-coil conformation. Serine 1203, serine 1224, serine 1245, serine 1255, serine 1259, serine 1261, serine 1264, and serine 1268 each carry phosphoserine. The interval 1237–1270 (GDLCSPKRSPTSSAIPFQSPRNSGSFPSPSISPR) is disordered. The span at 1244–1270 (RSPTSSAIPFQSPRNSGSFPSPSISPR) shows a compositional bias: polar residues.

Belongs to the MTUS1 family. In terms of assembly, homodimer. Interacts with AGTR2. Interacts with PTPN6. Associates with microtubules.

The protein resides in the mitochondrion. The protein localises to the golgi apparatus. It localises to the cell membrane. Its subcellular location is the nucleus. In terms of biological role, cooperates with AGTR2 to inhibit ERK2 activation and cell proliferation. May be required for AGTR2 cell surface expression. Together with PTPN6, induces UBE2V2 expression upon angiotensin-II stimulation. This is Microtubule-associated tumor suppressor 1 homolog (MTUS1) from Pongo abelii (Sumatran orangutan).